The sequence spans 71 residues: UPF0435 protein BLi00816/BL03111 (71 aa).

This sequence belongs to the UPF0435 family.

The polypeptide is UPF0435 protein BLi00816/BL03111 (Bacillus licheniformis (strain ATCC 14580 / DSM 13 / JCM 2505 / CCUG 7422 / NBRC 12200 / NCIMB 9375 / NCTC 10341 / NRRL NRS-1264 / Gibson 46)).